A 263-amino-acid polypeptide reads, in one-letter code: Endolytic peptidoglycan transglycosylase RlpA (263 aa).

The N-terminal stretch at 1 to 16 (MNRIYLYLLIVLILAG) is a signal peptide. A lipid anchor (N-palmitoyl cysteine) is attached at Cys17. Cys17 carries the S-diacylglycerol cysteine lipid modification. In terms of domain architecture, SPOR spans 182–257 (KNNALEYVIQ…AGYDSAFIKT (76 aa)).

This sequence belongs to the RlpA family.

The protein resides in the cell membrane. Functionally, lytic transglycosylase with a strong preference for naked glycan strands that lack stem peptides. The polypeptide is Endolytic peptidoglycan transglycosylase RlpA (Vibrio cholerae serotype O1 (strain ATCC 39315 / El Tor Inaba N16961)).